Consider the following 809-residue polypeptide: Origin of replication complex subunit 1A (809 aa).

Low complexity predominate over residues 1–47; that stretch reads MASSLSSKAKTFKSPTKTPTKMYRKSYLSPSSTSLTPPQTPETLTPL. The segment at 1-69 is disordered; sequence MASSLSSKAK…LGNDPIDLPG (69 aa). The histone H3 binding stretch occupies residues 160–185; it reads DPEIEDCQICFKSHTNTIMIECDDCL. A PHD-type zinc finger spans residues 163–213; it reads IEDCQICFKSHTNTIMIECDDCLGGFHLNCLKPPLKEVPEGDWICQFCEVK. Residues C166, C169, C181, C184, H189, and C192 each coordinate Zn(2+). Residues 201–205 are histone H3 binding; it reads PEGDW. Zn(2+) is bound by residues C207 and C210. One can recognise a BAH domain in the interval 223-341; the sequence is PKPPEGKKLA…VHWGSFKRVA (119 aa). The tract at residues 316–321 is histone H3 binding; the sequence is ASNDGD. Residues 431–799 are necessary and sufficient for ORC complex assembly; sequence PKSLPCRSKE…DDVAFALKDN (369 aa). Residues 466–473 and 466–474 each bind ATP; these read GVPGTGKT and GVPGTGKTI. Residues D556 and E557 each coordinate Mg(2+). 3 residues coordinate ATP: E557, N590, and R655.

This sequence belongs to the ORC1 family. As to quaternary structure, component of the origin recognition complex (ORC) composed of at least ORC1 (ORC1A or ORC1B), ORC2, ORC3, ORC4, ORC5 and ORC6. ORC is regulated in a cell-cycle and development dependent manner. It is sequentially assembled at the exit from anaphase of mitosis and disassembled as cells enter S phase. Interacts directly with ORC2, ORC3, ORC4 and ORC5. Binds mostly unmodified histone H3, and, with lower efficiency, H3K4me1 H3K4me2 and H3K4me3. In terms of tissue distribution, follow a cell-cycle regulation with a peak at the G1/S-phase. Mostly expressed in siliques, flowers and flower buds, and, to a lower extent, in roots, leaves and stems.

The protein localises to the nucleus. Functionally, essential protein. Component of the origin recognition complex (ORC) that binds origins of replication. It has a role in both chromosomal replication and mating type transcriptional silencing. Binds to the ARS consensus sequence (ACS) of origins of replication. H3K4me3 effector that positively regulates the transcription of a subset of genes. The sequence is that of Origin of replication complex subunit 1A from Arabidopsis thaliana (Mouse-ear cress).